A 371-amino-acid chain; its full sequence is tRNA-specific 2-thiouridylase MnmA (371 aa).

ATP-binding positions include 13–20 (GMSGGVDS) and Met39. The segment at 99 to 101 (NPD) is interaction with target base in tRNA. Cys104 serves as the catalytic Nucleophile. Cys104 and Cys200 are joined by a disulfide. Residue Gly128 coordinates ATP. The interval 150-152 (KDQ) is interaction with tRNA. The active-site Cysteine persulfide intermediate is Cys200. The interval 308 to 309 (RY) is interaction with tRNA.

This sequence belongs to the MnmA/TRMU family.

The protein resides in the cytoplasm. The enzyme catalyses S-sulfanyl-L-cysteinyl-[protein] + uridine(34) in tRNA + AH2 + ATP = 2-thiouridine(34) in tRNA + L-cysteinyl-[protein] + A + AMP + diphosphate + H(+). Catalyzes the 2-thiolation of uridine at the wobble position (U34) of tRNA, leading to the formation of s(2)U34. This is tRNA-specific 2-thiouridylase MnmA from Geobacillus thermodenitrificans (strain NG80-2).